The primary structure comprises 435 residues: MPHLENVVLCRESQVSILQSLFGERHHFSFPSIFIYGHTASGKTYVTQTLLKTLELPHVFVNCVECFTLRLLLEQILNKLNHLSSSEDGCSTEITCETFNDFVRLFKQVTTAENLKDQTVYIVLDKAEYLRDMEANLLPGFLRLQELADRNVTVLFLSEIVWEKFRPNTGCFEPFVLYFPDYSIGNLQKILSHDHPPEYSADFYAAYINILLGVFYTVCRDLKELRHLAVLNFPKYCEPVVKGEASERDTRKLWRNIEPHLKKAMQTVYLREISSSQWEKLQKDDTDPGQLKGLSAHTHVELPYYSKFILIAAYLASYNPARTDKRFFLKHHGKIKKTNFLKKHEKTSNHLLGPKPFPLDRLLAILYSIVDSRVAPTANIFSQITSLVTLQLLTLVGHDDQLDGPKYKCTVSLDFIRAIARTVNFDIIKYLYDFL.

37–44 (GHTASGKT) contributes to the ATP binding site.

This sequence belongs to the ORC5 family. In terms of assembly, component of ORC, a complex composed of at least 6 subunits: ORC1, ORC2, ORC3, ORC4, ORC5 and ORC6. ORC is regulated in a cell-cycle dependent manner. It is sequentially assembled at the exit from anaphase of mitosis and disassembled as cells enter S phase. In terms of processing, multi-mono-ubiquitinated by OBI1; ubiquitination is important for efficient DNA replication origin site activation. Ubiquitination levels are low in mitotic and early G1-phAse cells and are induced in late G1-/early S-phase, peaking in S-phase and decrease toward the end of the cell cycle. Abundant in spleen, ovary, prostate, testis, and colon mucosa.

It is found in the nucleus. It localises to the chromosome. Component of the origin recognition complex (ORC) that binds origins of replication. DNA-binding is ATP-dependent. The specific DNA sequences that define origins of replication have not been identified yet. ORC is required to assemble the pre-replication complex necessary to initiate DNA replication. This is Origin recognition complex subunit 5 (ORC5) from Homo sapiens (Human).